A 662-amino-acid chain; its full sequence is Cytochrome bo(3) ubiquinol oxidase subunit 1 (662 aa).

At 1–14 (MFGKLTFDAIPYHE) the chain is on the extracellular side. A helical membrane pass occupies residues 15-35 (PIIMITYIAIILIALCIASTI). Residues 36–58 (TYYKKWKYLWYEWFTTVDHKKIS) are Cytoplasmic-facing. Residues 59-79 (IMYGILAFVMLFRGFVDAILM) form a helical membrane-spanning segment. Residues R71, D75, and H98 each coordinate a ubiquinone. Over 80–106 (RTQQVVASAGFKGFLPPHHYDQIFTAH) the chain is Extracellular. H106 contributes to the heme b binding site. The helical transmembrane segment at 107-127 (GVIMIFFVAMPLVIGLMNLVI) threads the bilayer. Residues 128–145 (PLQIGARDVAFPFLNNLS) are Cytoplasmic-facing. A helical membrane pass occupies residues 146-166 (FWLNVSSAVLLTLSLGIGEFA). The Extracellular portion of the chain corresponds to 167 to 189 (QTGWLAYPPLSGIKYSSGVGVDY). W170 contributes to the heme b binding site. A helical transmembrane segment spans residues 190 to 210 (WIWSLQISGVGTTLTGINFLV). Residues 211–232 (TILKMRAPGMSFFKMPVFTWTS) lie on the Cytoplasmic side of the membrane. A helical transmembrane segment spans residues 233 to 253 (LCTNILIVISFPVLTVTLVLL). Residues 254–277 (TLDRYFNFHFFTNDLGGNAMMYVN) lie on the Extracellular side of the membrane. The chain crosses the membrane as a helical span at residues 278-298 (LIWIWGHPEVYILVLPVFGVF). Position 284 (H284) interacts with Cu(2+). A cross-link (1'-histidyl-3'-tyrosine (His-Tyr)) is located at residues 284-288 (HPEVY). Residue Y288 participates in Fe(II)-heme o binding. The Cytoplasmic segment spans residues 299 to 309 (SEVVATFSKKR). The chain crosses the membrane as a helical span at residues 310–330 (LFGYVSLVWATLSITILSFIV). At 331–346 (WLHHFFTMGAGADVNT) the chain is on the extracellular side. Cu(2+)-binding residues include H333 and H334. The helical transmembrane segment at 347-367 (FFGITTMIIAIPTGVKIFNWL) threads the bilayer. Over 368 to 380 (FTIYQGRVHMHSS) the chain is Cytoplasmic. A helical membrane pass occupies residues 381–401 (ILWTLGFLVTFSIGGMTGVLL). The Extracellular segment spans residues 402–413 (SVPPADFVLHNS). 2 residues coordinate Fe(II)-heme o: H411 and H419. Residues 414–434 (LFLVAHFHNVIIGGVVFGCFA) traverse the membrane as a helical segment. Residue H421 coordinates heme b. Residues 435–456 (GINYWFPKLFGFVLNEIWGKRA) lie on the Cytoplasmic side of the membrane. The chain crosses the membrane as a helical span at residues 457-477 (FWFWIIGFFLAFIPLYFLGLM). Topologically, residues 478 to 493 (GMTRRLSQNIDSEFHM) are extracellular. Heme b is bound by residues R481 and R482. Residues 494–514 (LLCIAAIGACFIGIGIICQVI) traverse the membrane as a helical segment. The Cytoplasmic portion of the chain corresponds to 515-586 (QFFISIKERR…INSINYHDIH (72 aa)). The helical transmembrane segment at 587–607 (MPKNTGLGFMISIFSLFFGFS) threads the bilayer. Residue A608 is a topological domain, extracellular. The helical transmembrane segment at 609 to 629 (VWHITWLCILSFLAIIISLFI) threads the bilayer. The Cytoplasmic segment spans residues 630–662 (NSLNEDTEYTISAEEIKKIEHQYWKNIQKAGLK).

This sequence belongs to the heme-copper respiratory oxidase family. The cytochrome bo(3) ubiquinol oxidase complex is a heterooctamer of two A chains, two B chains, two C chains and two D chains. Requires Cu(2+) as cofactor. Heme b serves as cofactor. The cofactor is Fe(II)-heme o.

It is found in the cell membrane. It carries out the reaction 2 a ubiquinol + O2 + n H(+)(in) = 2 a ubiquinone + 2 H2O + n H(+)(out). Its function is as follows. Cytochrome bo(3) ubiquinol oxidase is the terminal enzyme in the aerobic respiratory chain. Catalyzes the four-electron reduction of O2 to water, using a ubiquinol as a membrane soluble electron donor for molecular oxygen reduction. Has proton pump activity across the membrane in addition to electron transfer, pumping 2 protons/electron and generating a proton motive force. All the redox centers of this enzyme complex are located within the largest subunit, subunit I. Protons are probably pumped via D- and K- channels found in this subunit. This Buchnera aphidicola subsp. Acyrthosiphon pisum (strain APS) (Acyrthosiphon pisum symbiotic bacterium) protein is Cytochrome bo(3) ubiquinol oxidase subunit 1 (cyoB).